A 186-amino-acid polypeptide reads, in one-letter code: Cytochrome b6-f complex iron-sulfur subunit (186 aa).

Residues 16–38 form a helical membrane-spanning segment; the sequence is LLSFVTGGAIAATTAATLYPVVL. A Rieske domain is found at 74–163; it reads GEPVLTLGLD…ATVSDDKVLI (90 aa). Residues C109, H111, C127, and H130 each contribute to the [2Fe-2S] cluster site. C114 and C129 form a disulfide bridge.

This sequence belongs to the Rieske iron-sulfur protein family. In terms of assembly, the 4 large subunits of the cytochrome b6-f complex are cytochrome b6, subunit IV (17 kDa polypeptide, PetD), cytochrome f and the Rieske protein, while the 4 small subunits are PetG, PetL, PetM and PetN. The complex functions as a dimer. Requires [2Fe-2S] cluster as cofactor.

It is found in the cell inner membrane. The catalysed reaction is 2 oxidized [plastocyanin] + a plastoquinol + 2 H(+)(in) = 2 reduced [plastocyanin] + a plastoquinone + 4 H(+)(out). In terms of biological role, component of the cytochrome b6-f complex, which mediates electron transfer between photosystem II (PSII) and photosystem I (PSI), cyclic electron flow around PSI, and state transitions. In Gloeobacter violaceus (strain ATCC 29082 / PCC 7421), this protein is Cytochrome b6-f complex iron-sulfur subunit.